We begin with the raw amino-acid sequence, 653 residues long: Laccase ustL (653 aa).

The signal sequence occupies residues 1 to 20 (MTSLTGLALLLCVLASQSWA). 2 consecutive Plastocyanin-like domains span residues 31 to 143 (WEKG…RPKR) and 173 to 362 (VLSD…ATQV). 8 N-linked (GlcNAc...) asparagine glycosylation sites follow: asparagine 74, asparagine 220, asparagine 235, asparagine 255, asparagine 277, asparagine 405, asparagine 463, and asparagine 479. One can recognise a Plastocyanin-like 3 domain in the interval 463-594 (NQTVGTEDEK…GGMSIALLDG (132 aa)). Cu cation is bound by residues histidine 501, histidine 504, histidine 506, histidine 576, cysteine 577, histidine 578, and histidine 582. A glycan (N-linked (GlcNAc...) asparagine) is linked at asparagine 623.

Belongs to the multicopper oxidase family.

The enzyme catalyses 4 norrubrofusarin + O2 = 2 ustilaginoidin A + 2 H2O. It functions in the pathway secondary metabolite biosynthesis. Its function is as follows. Laccase; part of the gene cluster that mediates the biosynthesis of ustilaginoidins, dimeric gamma-naphthopyrones isolated from different fungal species. The first step in the biosynthesis of ustilaginoidins is the production of gamma-naphthopyrone precursor YWA1 by the non-reducing polyketide synthase ustP, via condensation of one acetyl-CoA starter unit with 6 malonyl-CoA units. YWA1 is then probably substrate of the ustZ to yield norrubrofusarin via a dehydration reaction. A key enzyme in the biosynthetic pathway is the laccase ustL, which catalyzes the oxidative dimerization of norrubrofusarin to ustilaginoidin A. It can produce the M- and P-atropisomers in varying amounts, depending on the reaction conditions. For the biosynthesis of 3-methylustilaginoid in derivatives such as chaetochromin A, a methylated derivative of YWA1 is required. The C-methylation is considered to be catalyzed by ustM, the phosphopantetheine attachment site of which indicates that it acts on the growing polyketide chain before release of the product. For the biosynthesis of chaetochromin A, it is assumed that saturation of the D2 double bond takes place before dimerization, and is probably catalyzed by an external reductase because no candidate gene was identified within the cluster. The chain is Laccase ustL from Ustilaginoidea virens (Rice false smut fungus).